The sequence spans 638 residues: LEAF RUST 10 DISEASE-RESISTANCE LOCUS RECEPTOR-LIKE PROTEIN KINASE-like 2.1 (638 aa).

The first 29 residues, methionine 1–serine 29, serve as a signal peptide directing secretion. The Extracellular segment spans residues valine 30 to glycine 264. Asparagine 69, asparagine 114, asparagine 136, asparagine 204, and asparagine 239 each carry an N-linked (GlcNAc...) asparagine glycan. A helical transmembrane segment spans residues isoleucine 265–phenylalanine 285. Residues phenylalanine 286 to serine 638 lie on the Cytoplasmic side of the membrane. Positions lysine 321–isoleucine 609 constitute a Protein kinase domain. Residues leucine 327–valine 335 and lysine 349 contribute to the ATP site. Tyrosine 393 carries the phosphotyrosine modification. Aspartate 444 functions as the Proton acceptor in the catalytic mechanism. At threonine 484 the chain carries Phosphothreonine.

The protein belongs to the protein kinase superfamily. Ser/Thr protein kinase family.

The protein localises to the membrane. It carries out the reaction L-seryl-[protein] + ATP = O-phospho-L-seryl-[protein] + ADP + H(+). The catalysed reaction is L-threonyl-[protein] + ATP = O-phospho-L-threonyl-[protein] + ADP + H(+). This Arabidopsis thaliana (Mouse-ear cress) protein is LEAF RUST 10 DISEASE-RESISTANCE LOCUS RECEPTOR-LIKE PROTEIN KINASE-like 2.1.